The chain runs to 446 residues: Probable glycine dehydrogenase (decarboxylating) subunit 1 (446 aa).

Belongs to the GcvP family. N-terminal subunit subfamily. The glycine cleavage system is composed of four proteins: P, T, L and H. In this organism, the P 'protein' is a heterodimer of two subunits.

The catalysed reaction is N(6)-[(R)-lipoyl]-L-lysyl-[glycine-cleavage complex H protein] + glycine + H(+) = N(6)-[(R)-S(8)-aminomethyldihydrolipoyl]-L-lysyl-[glycine-cleavage complex H protein] + CO2. The glycine cleavage system catalyzes the degradation of glycine. The P protein binds the alpha-amino group of glycine through its pyridoxal phosphate cofactor; CO(2) is released and the remaining methylamine moiety is then transferred to the lipoamide cofactor of the H protein. The protein is Probable glycine dehydrogenase (decarboxylating) subunit 1 of Protochlamydia amoebophila (strain UWE25).